The sequence spans 126 residues: Small ribosomal subunit protein uS12 (126 aa).

The tract at residues 1 to 29 (MPTIQQLIRQPRAPKKRRSKSPALQKCPQ) is disordered. A 3-methylthioaspartic acid modification is found at Asp89.

This sequence belongs to the universal ribosomal protein uS12 family. As to quaternary structure, part of the 30S ribosomal subunit. Contacts proteins S8 and S17. May interact with IF1 in the 30S initiation complex.

Functionally, with S4 and S5 plays an important role in translational accuracy. In terms of biological role, interacts with and stabilizes bases of the 16S rRNA that are involved in tRNA selection in the A site and with the mRNA backbone. Located at the interface of the 30S and 50S subunits, it traverses the body of the 30S subunit contacting proteins on the other side and probably holding the rRNA structure together. The combined cluster of proteins S8, S12 and S17 appears to hold together the shoulder and platform of the 30S subunit. The polypeptide is Small ribosomal subunit protein uS12 (Protochlamydia amoebophila (strain UWE25)).